The sequence spans 542 residues: MITRSRCRRSLLWFLVFHGGATATGAPSGGKELSQTPTWAVAVVCTFLILISHLLEKGLQRLANWLWKKHKNSLLEALEKIKAELMILGFISLLLTFGEPYILKICVPRKAALSMLPCLSEDTVLFQKLAPSSLSRHLLAAGDTSINCKQGSEPLITLKGLHQLHILLFFLAIFHIVYSLITMMLSRLKIRGWKKWEQETLSNDYEFSIDHSRLRLTHETSFVREHTSFWTTTPFFFYVGCFFRQFFVSVERTDYLTLRHGFISAHLAPGRKFNFQRYIKRSLEDDFKLVVGISPVLWASFVIFLLFNVNGWRTLFWASIPPLLIILAVGTKLQAIMATMALEIVETHAVVQGMPLVQGSDRYFWFDCPQLLLHLIHFALFQNAFQITHFFWIWYSFGLKSCFHKDFNLVVSKLFLCLGALILCSYITLPLYALVTQMGSHMKKAVFDEQMAKALKKWHKDIKLKKGKARKLPSKTLGVSESFSLSSSSSATTLHRSKTTGHSSNIIYYKQEDEEDEMSDLEAGAEDAIDRIQQQEMQFHNS.

Over 1–38 (MITRSRCRRSLLWFLVFHGGATATGAPSGGKELSQTPT) the chain is Extracellular. The chain crosses the membrane as a helical span at residues 39–59 (WAVAVVCTFLILISHLLEKGL). Over 60–82 (QRLANWLWKKHKNSLLEALEKIK) the chain is Cytoplasmic. A helical transmembrane segment spans residues 83–103 (AELMILGFISLLLTFGEPYIL). The Extracellular segment spans residues 104 to 165 (KICVPRKAAL…ITLKGLHQLH (62 aa)). The chain crosses the membrane as a helical span at residues 166–186 (ILLFFLAIFHIVYSLITMMLS). At 187–288 (RLKIRGWKKW…IKRSLEDDFK (102 aa)) the chain is on the cytoplasmic side. A helical membrane pass occupies residues 289 to 309 (LVVGISPVLWASFVIFLLFNV). Over 310 to 315 (NGWRTL) the chain is Extracellular. Residues 316-336 (FWASIPPLLIILAVGTKLQAI) form a helical membrane-spanning segment. At 337 to 374 (MATMALEIVETHAVVQGMPLVQGSDRYFWFDCPQLLLH) the chain is on the cytoplasmic side. Residues 375–395 (LIHFALFQNAFQITHFFWIWY) traverse the membrane as a helical segment. Residues 396–414 (SFGLKSCFHKDFNLVVSKL) are Extracellular-facing. A helical membrane pass occupies residues 415–435 (FLCLGALILCSYITLPLYALV). Residues 436–542 (TQMGSHMKKA…QQQEMQFHNS (107 aa)) are Cytoplasmic-facing. Residues 449–470 (EQMAKALKKWHKDIKLKKGKAR) form a calmodulin-binding region.

It belongs to the MLO family. Restricted to pollen, synergids, pistils and immature anthers. Also detected in seedlings, leaves, stems and inflorescens.

The protein resides in the cell membrane. Its subcellular location is the endomembrane system. In terms of biological role, may be involved in modulation of pathogen defense and leaf cell death. Activity seems to be regulated by Ca(2+)-dependent calmodulin binding and seems not to require heterotrimeric G proteins. Controls pollen tube reception in the female gametophyte synergids. This Arabidopsis thaliana (Mouse-ear cress) protein is MLO-like protein 7 (MLO7).